Reading from the N-terminus, the 309-residue chain is uncharacterized protein (309 aa).

This is an uncharacterized protein from Bacillus subtilis (strain 168).